Here is a 343-residue protein sequence, read N- to C-terminus: Squamosa promoter-binding-like protein 11 (343 aa).

Residues 1 to 48 form a disordered region; the sequence is MECNPVSSTTSSSLLWDWDATASAEPPPPPGKRGGRDSSSASASAKRG. 2 stretches are compositionally biased toward low complexity: residues 7 to 19 and 37 to 48; these read SSTT…WDWD and DSSSASASAKRG. An SBP-type zinc finger spans residues 64–141; that stretch reads APRCQVEGCG…SDHNARRRKP (78 aa). 8 residues coordinate Zn(2+): Cys67, Cys72, Cys89, His92, Cys108, Cys111, His115, and Cys127. A Bipartite nuclear localization signal motif is present at residues 124–140; sequence KRSCRRRLSDHNARRRK.

In terms of tissue distribution, expressed in stems, leaf sheaths, and young panicles.

The protein resides in the nucleus. Trans-acting factor that binds specifically to the consensus nucleotide sequence 5'-TNCGTACAA-3'. May be involved in panicle development. In Oryza sativa subsp. japonica (Rice), this protein is Squamosa promoter-binding-like protein 11 (SPL11).